A 354-amino-acid chain; its full sequence is CCN family member 3 (354 aa).

The first 21 residues, 1–21, serve as a signal peptide directing secretion; the sequence is MSLFLRKRCLCLGFLLFHLLS. The IGFBP N-terminal domain maps to 25-99; sequence ASLRCPSRCP…NNQTGICMVP (75 aa). Intrachain disulfides connect C29/C55, C33/C57, C37/C58, C44/C61, C69/C83, and C75/C96. N-linked (GlcNAc...) asparagine glycosylation is present at N91. In terms of domain architecture, VWFC spans 102–168; the sequence is DNCVFDGVIY…GECCEKWTCG (67 aa). Residues 202 to 247 enclose the TSP type-1 domain; the sequence is NCIEQTTEWSACSKSCGMGVSTRVTNRNRQCEMVKQTRLCIVRPCE. A lipid anchor (S-palmitoyl cysteine) is attached at C241. 5 disulfide bridges follow: C261–C298, C278–C312, C289–C328, C292–C330, and C297–C334. A CTCK domain is found at 261-335; it reads CLRTKKSLKA…GTCTCYSNCP (75 aa). N277 carries an N-linked (GlcNAc...) asparagine glycan.

It belongs to the CCN family. As to quaternary structure, interacts with FBLN1. Interacts (via CTCK domain) with NOTCH1 (via the EGF-like repeat region). Interacts with GJA1/CX43. Interacts with ITGA5:ITGB1, ITGAV:ITGB3 and ITGAV:ITGB5. Interacts with ZDHHC22; the interaction may lead to CCN3 palmitoylation. Post-translationally, may be palmitoylated on Cys-241, which is important for extracellular secretion. As to expression, expressed in large vessels including the ascending aorta, carotid arteries, and the thoracic aorta, in medium-sized vessels such as coronary arteries and small pulmonary veins and also in small vessels. In addition, also found to be present in the heart (at protein level). Expressed in astrocytes (at protein level). Detected in brain, bone, lung and muscle tissues. Expressed in skin, expression highly increases 5 days post-wounding, peaking on the 7th day to decline after 9 days. Expressed in pancreatic ducts and beta-cell islets. Expressed in the brain, in arcuate nucleus ESR1/KISS1 neurons, during lactation (at protein level).

It localises to the secreted. The protein resides in the cytoplasm. Its subcellular location is the cell junction. It is found in the gap junction. In terms of biological role, immediate-early protein playing a role in various cellular processes including proliferation, adhesion, migration, differentiation and survival. Acts by binding to integrins or membrane receptors such as NOTCH1. Essential regulator of hematopoietic stem and progenitor cell function. Inhibits myogenic differentiation through the activation of Notch-signaling pathway. Inhibits vascular smooth muscle cells proliferation by increasing expression of cell-cycle regulators such as CDKN2B or CDKN1A independently of TGFB1 signaling. Ligand of integrins ITGAV:ITGB3 and ITGA5:ITGB1, acts directly upon endothelial cells to stimulate pro-angiogenic activities and induces angiogenesis. In endothelial cells, supports cell adhesion, induces directed cell migration (chemotaxis) and promotes cell survival. Also plays a role in cutaneous wound healing acting as integrin receptor ligand. Supports skin fibroblast adhesion through ITGA5:ITGB1 and ITGA6:ITGB1 and induces fibroblast chemotaxis through ITGAV:ITGB5. Seems to enhance bFGF-induced DNA synthesis in fibroblasts. Involved in bone regeneration as a negative regulator. Enhances the articular chondrocytic phenotype, whereas it repressed the one representing endochondral ossification. Impairs pancreatic beta-cell function, inhibits beta-cell proliferation and insulin secretion. Plays a role as negative regulator of endothelial pro-inflammatory activation reducing monocyte adhesion, its anti-inflammatory effects occur secondary to the inhibition of NF-kappaB signaling pathway. Contributes to the control and coordination of inflammatory processes in atherosclerosis. Attenuates inflammatory pain through regulation of IL1B- and TNF-induced MMP9, MMP2 and CCL2 expression. Inhibits MMP9 expression through ITGB1 engagement. Brain osteoanabolic hormone. During lactation, maintains the maternal skeleton and viability of offspring. In this context, may act on osteochondral skeletal stem cells. This is CCN family member 3 (Ccn3) from Mus musculus (Mouse).